Consider the following 594-residue polypeptide: DELLA protein 1 (594 aa).

The interval 1 to 36 (MKREHQESFGGGVISNNNKTNTNHLNSSKNINFGEC) is disordered. The segment covering 15 to 30 (SNNNKTNTNHLNSSKN) has biased composition (low complexity). Positions 61–65 (DELLA) match the DELLA motif motif. In terms of domain architecture, GRAS spans 207 to 587 (VDTQETGVRL…RSLIATSAWK (381 aa)). Residues 214-268 (VRLVHTLMACAEAIQQKNLKLAEALVKHISLLASLQTGAMRKVASYFAQALARRI) form a leucine repeat I (LRI) region. The tract at residues 216 to 253 (LVHTLMACAEAIQQKNLKLAEALVKHISLLASLQTGAM) is required for possible homodimerization. Positions 221–225 (MACAE) match the LxCxE motif; degenerate motif. Residues 285–350 (HMHFYESSPY…GGPPTFRLTG (66 aa)) are VHIID. Residues 316 to 320 (VHVID) carry the VHIID motif. A leucine repeat II (LRII) region spans residues 364 to 396 (QVGWKLAQLAQTIGVQFEFRGFVCNSIADLDPN). The segment at 406-508 (VAVNSVFELH…EIYLGKQICN (103 aa)) is PFYRE. The LXXLL motif; degenerate signature appears at 414–418 (LHTML). The tract at residues 511–587 (AYEGVDRVER…RSLIATSAWK (77 aa)) is SAW.

It belongs to the GRAS family. DELLA subfamily. As to quaternary structure, may be a homodimer. In terms of processing, ubiquitinated. Upon GA application it is ubiquitinated, leading to its subsequent degradation. Strongly expressed in the vascular tissue and endodermis but barely in the inner cortical cells where arbuscule are formed during arbuscular mycorrhizal (AM) symbiosis.

The protein resides in the nucleus. Probable transcriptional regulator that acts as a repressor of the gibberellin (GA) signaling pathway. Probably acts by participating in large multiprotein complexes that repress transcription of GA-inducible genes. Upon GA application, it is degraded by the proteasome, allowing the GA signaling pathway. Together with DELLA2, required to enable arbuscule development during arbuscular mycorrhizal (AM) symbiosis with AM fungi (e.g. Glomus versiforme) via the regulation of RAM1 which, in turn, regulates various AM genes (e.g. NSP1, NSP2, PT4, LEC5, RAM2, EXO70I, STR and RAD1). This is DELLA protein 1 from Medicago truncatula (Barrel medic).